Consider the following 216-residue polypeptide: Glutathione S-transferase D5 (216 aa).

The GST N-terminal domain occupies 1–80; sequence MDFYYSPRGS…YLVEKYGKDD (80 aa). Residues 50–52 and 64–66 contribute to the glutathione site; these read HTI and ESR. Residues 86 to 207 enclose the GST C-terminal domain; sequence DPKKQALVNQ…KGAVELKGVF (122 aa).

It belongs to the GST superfamily. Delta family. In terms of assembly, homodimer.

It catalyses the reaction RX + glutathione = an S-substituted glutathione + a halide anion + H(+). Conjugation of reduced glutathione to a wide number of exogenous and endogenous hydrophobic electrophiles. May be involved in detoxification. In Drosophila melanogaster (Fruit fly), this protein is Glutathione S-transferase D5.